Reading from the N-terminus, the 185-residue chain is Elongation factor P (185 aa).

This sequence belongs to the elongation factor P family.

It is found in the cytoplasm. It participates in protein biosynthesis; polypeptide chain elongation. In terms of biological role, involved in peptide bond synthesis. Stimulates efficient translation and peptide-bond synthesis on native or reconstituted 70S ribosomes in vitro. Probably functions indirectly by altering the affinity of the ribosome for aminoacyl-tRNA, thus increasing their reactivity as acceptors for peptidyl transferase. This is Elongation factor P from Endomicrobium trichonymphae.